The chain runs to 1390 residues: DNA-directed RNA polymerase subunit beta' (1390 aa).

Zn(2+) is bound by residues Cys70, Cys72, Cys85, and Cys88. 3 residues coordinate Mg(2+): Asp460, Asp462, and Asp464. The Zn(2+) site is built by Cys814, Cys888, Cys895, and Cys898.

Belongs to the RNA polymerase beta' chain family. In terms of assembly, the RNAP catalytic core consists of 2 alpha, 1 beta, 1 beta' and 1 omega subunit. When a sigma factor is associated with the core the holoenzyme is formed, which can initiate transcription. Mg(2+) serves as cofactor. The cofactor is Zn(2+).

It catalyses the reaction RNA(n) + a ribonucleoside 5'-triphosphate = RNA(n+1) + diphosphate. In terms of biological role, DNA-dependent RNA polymerase catalyzes the transcription of DNA into RNA using the four ribonucleoside triphosphates as substrates. The chain is DNA-directed RNA polymerase subunit beta' from Pseudoalteromonas translucida (strain TAC 125).